A 238-amino-acid chain; its full sequence is tRNA (guanine-N(7)-)-methyltransferase (238 aa).

4 residues coordinate S-adenosyl-L-methionine: Glu68, Glu93, Asp120, and Asp143. The active site involves Asp143. Substrate contacts are provided by residues Lys147, Asp179, and 216 to 219 (TKFE).

Belongs to the class I-like SAM-binding methyltransferase superfamily. TrmB family.

It catalyses the reaction guanosine(46) in tRNA + S-adenosyl-L-methionine = N(7)-methylguanosine(46) in tRNA + S-adenosyl-L-homocysteine. It participates in tRNA modification; N(7)-methylguanine-tRNA biosynthesis. In terms of biological role, catalyzes the formation of N(7)-methylguanine at position 46 (m7G46) in tRNA. The polypeptide is tRNA (guanine-N(7)-)-methyltransferase (Shewanella amazonensis (strain ATCC BAA-1098 / SB2B)).